Reading from the N-terminus, the 443-residue chain is Xaa-Pro dipeptidase (443 aa).

Residues Asp-246, Asp-257, His-339, Glu-384, and Glu-423 each coordinate Mn(2+).

Belongs to the peptidase M24B family. Bacterial-type prolidase subfamily. Mn(2+) serves as cofactor.

The enzyme catalyses Xaa-L-Pro dipeptide + H2O = an L-alpha-amino acid + L-proline. Splits dipeptides with a prolyl residue in the C-terminal position. In Cronobacter sakazakii (strain ATCC BAA-894) (Enterobacter sakazakii), this protein is Xaa-Pro dipeptidase.